Consider the following 234-residue polypeptide: Mediator of RNA polymerase II transcription subunit 4 (234 aa).

Residues 71-124 (HQEAYRRLVEKKNEVAGLEMRVRGLVKRLEEGRKELEGMIDQGERSLEDIQKSE) adopt a coiled-coil conformation. The segment at 188–234 (GVVGEEQKAPQKVEERREHVEHEESGRRYDPNAVFQLDLNSDESDED) is disordered. Residues 189-217 (VVGEEQKAPQKVEERREHVEHEESGRRYD) show a composition bias toward basic and acidic residues.

The protein belongs to the Mediator complex subunit 4 family. As to quaternary structure, component of the Mediator complex.

Its subcellular location is the nucleus. Functionally, component of the Mediator complex, a coactivator involved in the regulated transcription of nearly all RNA polymerase II-dependent genes. Mediator functions as a bridge to convey information from gene-specific regulatory proteins to the basal RNA polymerase II transcription machinery. Mediator is recruited to promoters by direct interactions with regulatory proteins and serves as a scaffold for the assembly of a functional preinitiation complex with RNA polymerase II and the general transcription factors. In Cryptococcus neoformans var. neoformans serotype D (strain B-3501A) (Filobasidiella neoformans), this protein is Mediator of RNA polymerase II transcription subunit 4 (MED4).